We begin with the raw amino-acid sequence, 1038 residues long: Elongation factor 3 (1038 aa).

HEAT repeat units follow at residues 93-131, 133-170, 174-211, 213-249, 255-287, and 292-331; these read EAYL…SANK, STIR…VAPY, RCLP…VVGN, DIEP…TVEA, MEPL…LMDD, and QLFI…AGGS. Glu406 contacts ADP. ABC transporter domains follow at residues 426 to 654 and 680 to 995; these read IFIE…YYEL and IRLT…EEVT. Residues Asn716, Glu924, Asn927, and His953 each coordinate ADP. Positions 1012 to 1038 are disordered; that stretch reads RKEKKAKDKARKEAEARGEYYSDSDEE. Residues 1021-1031 show a composition bias toward basic and acidic residues; it reads ARKEAEARGEY.

It belongs to the ABC transporter superfamily. ABCF family. EF3 subfamily. In terms of assembly, monomer.

The protein resides in the cytoplasm. It carries out the reaction ATP + H2O = ADP + phosphate + H(+). It participates in protein biosynthesis; polypeptide chain elongation. Its function is as follows. Ribosome-dependent ATPase that functions in cytoplasmic translation elongation. Required for the ATP-dependent release of deacylated tRNA from the ribosomal E-site during protein biosynthesis. Stimulates the eEF1A-dependent binding of aminoacyl-tRNA to the ribosomal A-site, which has reduced affinity for tRNA as long as the E-site is occupied. Assists translation termination by stimulating the release of nascent protein from the ribosome by release factors. The polypeptide is Elongation factor 3 (Phytophthora infestans (strain T30-4) (Potato late blight agent)).